Consider the following 186-residue polypeptide: Ran guanine nucleotide release factor (186 aa).

The tract at residues 27-70 (DLRPVPDHQEVFCHRVTDQSLIVELLELQAHVQGEEAARYHFED) is interaction with RAN.

It belongs to the MOG1 family. In terms of assembly, monomer. Interacts with RAN, both RAN-GTP and RAN-GDP. Competes with RCC1 for a common binding site on RAN and thereby inhibits RCC1-mediated nucleotide exchange. Forms a complex with RAN-GTP and RANBP1. Interacts with the cytoplasmic loop 2 of SCN5A.

It localises to the nucleus. The protein resides in the cytoplasm. Its subcellular location is the perinuclear region. It is found in the cell membrane. May regulate the intracellular trafficking of RAN. Promotes guanine nucleotide release from RAN and inhibits binding of new GTP by preventing the binding of the RAN guanine nucleotide exchange factor RCC1. Regulates the levels of GTP-bound RAN in the nucleus, and thereby plays a role in the regulation of RAN-dependent mitotic spindle dynamics. Enhances the expression of SCN5A at the cell membrane in cardiomyocytes. This is Ran guanine nucleotide release factor (RANGRF) from Bos taurus (Bovine).